Consider the following 276-residue polypeptide: Ribosomal RNA small subunit methyltransferase A (276 aa).

Residues histidine 15, leucine 17, glycine 42, glutamate 64, aspartate 89, and asparagine 108 each contribute to the S-adenosyl-L-methionine site.

It belongs to the class I-like SAM-binding methyltransferase superfamily. rRNA adenine N(6)-methyltransferase family. RsmA subfamily.

Its subcellular location is the cytoplasm. The catalysed reaction is adenosine(1518)/adenosine(1519) in 16S rRNA + 4 S-adenosyl-L-methionine = N(6)-dimethyladenosine(1518)/N(6)-dimethyladenosine(1519) in 16S rRNA + 4 S-adenosyl-L-homocysteine + 4 H(+). In terms of biological role, specifically dimethylates two adjacent adenosines (A1518 and A1519) in the loop of a conserved hairpin near the 3'-end of 16S rRNA in the 30S particle. May play a critical role in biogenesis of 30S subunits. This is Ribosomal RNA small subunit methyltransferase A from Prochlorococcus marinus (strain MIT 9312).